The chain runs to 1002 residues: Solute carrier family 12 member 3 (1002 aa).

Residues 1–135 (MAELPVTELP…KSPGEPVRFG (135 aa)) are Cytoplasmic-facing. Serine 41 carries the post-translational modification Phosphoserine. Residue threonine 44 is modified to Phosphothreonine. A Phosphoserine modification is found at serine 47. A phosphothreonine mark is found at threonine 48, threonine 53, and threonine 58. Residues serine 71 and serine 89 each carry the phosphoserine modification. Threonine 122 carries the phosphothreonine modification. Position 124 is a phosphoserine (serine 124). A discontinuously helical transmembrane segment spans residues 136–165 (WVKGVMIRCMLNIWGVILYLRLPWITAQAG). 2 residues coordinate Na(+): leucine 146 and tryptophan 149. The helical transmembrane segment at 166–187 (IVLTWLIILLSVMVTSITGLSI) threads the bilayer. Topologically, residues 188–218 (SAISTNGKVKSGGTYFLISRSLGPELGGSIG) are cytoplasmic. Residues 219-241 (LIFAFANAVGVAMHTVGFAETVR) traverse the membrane as a helical segment. At 242 to 253 (DLLQEYGTPIVD) the chain is on the extracellular side. The next 2 membrane-spanning stretches (helical) occupy residues 254 to 278 (PIND…AGME) and 279 to 301 (WESK…YLVG). Over 302 to 336 (TLIPASEDKASKGFYSYHGDIFVQNLVPDWRGIDG) the chain is Extracellular. A discontinuously helical membrane pass occupies residues 337–358 (SFFGMFSIFFPSATGILAGANI). The chloride site is built by glycine 351, isoleucine 352, and leucine 353. Residues 359–369 (SGDLKDPAVAI) are Cytoplasmic-facing. Residues 370–391 (PKGTLMAIFWTTISYLAISATI) traverse the membrane as a helical segment. Over 392 to 451 (GSCVVRDASGDVNDTMTPGPGPCEGLACGYGWNFTECSQQRSCRYGLINYYQTMSMVSAF) the chain is Extracellular. N-linked (GlcNAc...) asparagine glycosylation is present at asparagine 404. An intrachain disulfide couples cysteine 414 to cysteine 419. An N-linked (GlcNAc...) asparagine glycan is attached at asparagine 424. Cysteine 428 and cysteine 434 are joined by a disulfide. A helical transmembrane segment spans residues 452 to 475 (APLITAGIFGATLSSALACLVSAA). Na(+)-binding residues include alanine 462, serine 465, and serine 466. Residues 476-505 (KVFQCLCEDQLYPLIGFFGKGYGKNREPVR) are Cytoplasmic-facing. A helical transmembrane segment spans residues 506-520 (GYLLAYAIAVAFIII). Residues 521–525 (AELNT) are Extracellular-facing. A helical membrane pass occupies residues 526–542 (IAPIISNFFLCSYALIN). Tyrosine 538 is a chloride binding site. At 543-565 (FSCFHASITNSPGWRPSFRYYSK) the chain is on the cytoplasmic side. 2 consecutive transmembrane segments (helical) span residues 566 to 585 (WAAL…LTWW) and 586 to 597 (AALIAIGVVLFL). Residues 598-1002 (LLYVIYKKPE…QENVLTFYCQ (405 aa)) lie on the Cytoplasmic side of the membrane. The scissor helix stretch occupies residues 613–628 (SVQAGSYNLALSYSVG). Residues leucine 646, arginine 653, valine 675, glycine 739, leucine 778, and asparagine 779 each contribute to the ATP site.

The protein belongs to the SLC12A transporter family. As to quaternary structure, homodimer; adopts a domain-swap conformation at the scissor helices connecting the transmembrane domain and C-terminal domain. Interacts with KLHL3. Interacts with IL18R1; this interaction is increased by IL18 treatment. Post-translationally, ubiquitinated; ubiquitination is essential for regulation of endocytosis. Phosphorylated at Thr-53, Thr-58 and Ser-71 by OXSR1/OSR1 and STK39/SPAK downstream of WNK4, promoting its activity. Phosphorylated in response to IL18. As to expression, expressed predominantly in kidney, including in distal tubules (at protein level). Detected at low levels in heart, lung and liver. Not detected in normal aorta, but abundantly expressed in fatty streaks and advanced atherosclerotic lesions. In atherosclerotic lesions, expressed in macrophages, smooth muscle cells and endothelial cells (at protein level).

Its subcellular location is the cell membrane. It localises to the apical cell membrane. It catalyses the reaction chloride(out) + Na(+)(out) = chloride(in) + Na(+)(in). With respect to regulation, phosphorylation by OXSR1/OSR1 and STK39/SPAK in kidney distal convoluted tubules promotes its activity. Also activated by OXSR1/OSR1 and STK39/SPAK downstream of WNK3. Inhibited by thiazide-type diuretic metolazone. Thiazide drugs, such as polythiazide, specifically inhibit SLC12A3/NCC transporter activity by competing with chloride for binding. In terms of biological role, electroneutral sodium and chloride ion cotransporter, which acts as a key mediator of sodium and chloride reabsorption in kidney distal convoluted tubules. Also acts as a receptor for the pro-inflammatory cytokine IL18, thereby contributing to IL18-induced cytokine production, including IFNG, IL6, IL18 and CCL2. May act either independently of IL18R1, or in a complex with IL18R1. In Mus musculus (Mouse), this protein is Solute carrier family 12 member 3.